The chain runs to 189 residues: Probable nicotinate-nucleotide adenylyltransferase (189 aa).

This sequence belongs to the NadD family.

The catalysed reaction is nicotinate beta-D-ribonucleotide + ATP + H(+) = deamido-NAD(+) + diphosphate. Its pathway is cofactor biosynthesis; NAD(+) biosynthesis; deamido-NAD(+) from nicotinate D-ribonucleotide: step 1/1. In terms of biological role, catalyzes the reversible adenylation of nicotinate mononucleotide (NaMN) to nicotinic acid adenine dinucleotide (NaAD). This Exiguobacterium sibiricum (strain DSM 17290 / CCUG 55495 / CIP 109462 / JCM 13490 / 255-15) protein is Probable nicotinate-nucleotide adenylyltransferase.